The sequence spans 328 residues: MGAAARLSAPRALVLWAALGAAAHIGPAPDPEDWWSYKDNLQGNFVPGPPFWGLVNAAWSLCVVGKRQSPVDVELKRVLYDPFLPPLRLSTGGEKLRGTLYNTGRHVSFLPAPRPVVNVSGGPLLYSHRLSELRLLFGARDGAGSEHQINHQGFSAEVQLIHFNQELYGNLSAATRGPNGLAILSLFVNVAGSSNPFLSRLLNRDTITRISYKNDAYFLQDLSLELLFPESFGFITYQGSLSTPPCSETVTWILIDRALNITSLQMHSLRLLSQNPPSQIFQSLSGNGRPLQPLAHRALRGNRDPRHPERRCRGPNYRLHVDGAPHGR.

The signal sequence occupies residues 1–22 (MGAAARLSAPRALVLWAALGAA). The Alpha-carbonic anhydrase domain maps to 33–303 (DWWSYKDNLQ…LAHRALRGNR (271 aa)). N-linked (GlcNAc...) asparagine glycosylation is found at N118, N170, and N260. Residues 300-328 (RGNRDPRHPERRCRGPNYRLHVDGAPHGR) are disordered. Positions 319–328 (LHVDGAPHGR) are enriched in basic and acidic residues.

Belongs to the alpha-carbonic anhydrase family.

The protein resides in the secreted. Its function is as follows. Does not have a catalytic activity. The polypeptide is Carbonic anhydrase-related protein 11 (CA11) (Bos taurus (Bovine)).